The primary structure comprises 691 residues: Pentatricopeptide repeat-containing protein At4g37170 (691 aa).

PPR repeat units follow at residues 84-118, 119-149, 150-184, 185-211, 217-251, 252-286, 287-317, 318-352, 353-383, 384-418, 419-449, and 455-485; these read PASTYCNLIQVCSQTRALEEGKKVHEHIRTSGFVP, GIVIWNRLLRMYAKCGSLVDARKVFDEMPNR, DLCSWNVMVNGYAEVGLLEEARKLFDEMTEKDSYS, WTAMVTGYVKKDQPEEALVLYSLMQRV, NIFTVSIAVAAAAAVKCIRRGKEIHGHIVRAGLDS, DEVLWSSLMDMYGKCGCIDEARNIFDKIVEKDVVS, WTSMIDRYFKSSRWREGFSLFSELVGSCERP, NEYTFAGVLNACADLTTEELGKQVHGYMTRVGFDP, YSFASSSLVDMYTKCGNIESAKHVVDGCPKP, DLVSWTSLIGGCAQNGQPDEALKYFDLLLKSGTKP, DHVTFVNVLSACTHAGLVEKGLEFFYSITEK, and TSDHYTCLVDLLARSGRFEQLKSVISEMPMK. A type E motif region spans residues 490–565; it reads LWASVLGGCS…RPGSSWTEIK (76 aa). Residues 566–596 are type E(+) motif; sequence RKRHVFIAADTSHPMYNQIVEFLRELRKKMK. Residues 597–691 form a type DYW motif region; sequence EEGYVPATSL…NGQCSCGDYW (95 aa).

Belongs to the PPR family. PCMP-H subfamily.

In Arabidopsis thaliana (Mouse-ear cress), this protein is Pentatricopeptide repeat-containing protein At4g37170 (PCMP-H5).